A 707-amino-acid chain; its full sequence is MGEQRLARSSFLWGLSGIYLVAFVSLYAQIPGLYGREGILPAWKMMRFTGKGFWEQLKDSPSLLWFGPRLGLDTEMTMEMICLLGALLSLGALLFSFLRDSLVFLLLWIFYLSLYQVGQVFLYFQWDSLLLETGFLAVLVAPVHALRWKTSVWSSHDGVTFWLTRWLLFRLMFASGIVKLTSRCPTWWGLTALTYHYETQCIPNPAAWFAHQLPVWFQKFSVVATYFIEIGVPLLFFLPFRRLRLFSFYSQVVLQILIIMTGNYNFFNLLTVVLCCSLLDDQHITFFQRHKKPQHKGGRVTSAFSLYSLISLLDVPIFGLLVFWTVKYFDLQINWEKHSVESRTAFTYHDFQQWLRTITFPTIWIAAASLGWEILKGMYRSASVRGIFWKLWSTLQWVIFSCAAVAMFTISLVPYTYIDFESNGHLWPEVHRMFNAVDRYQLVNSYGLFRRMTGVGGRPEVIVEGSYDRETWTEIEFMYKPGNISTTPSVIIPHQPRLDWQMWFAALAHNSHSPWFASFVYRLLQGNKDVIHLVQNDESLYPFHAYPPTYIRAQLYKYWFTEVDQSGQMPKSWWRRRHVEEFFPAVFLGDPFLDNLLTQHGLKDKPPARRSLDAPIPSALRLIRAFLHPLPAPLLLHSFIFGIFTIYFLQAMFGGVSKPGVAKQRHSKPPNEKKKQKSNSGQGESAAAKSSGHGADTVRRNKKNEKS.

9 helical membrane-spanning segments follow: residues 11–31 (FLWG…AQIP), 78–98 (MEMI…FSFL), 102–122 (LVFL…QVFL), 126–146 (WDSL…VHAL), 220–240 (FSVV…FLPF), 256–276 (ILII…VLCC), 306–326 (LYSL…FWTV), 358–378 (ITFP…LKGM), and 398–418 (VIFS…YTYI). Asparagine 483 carries an N-linked (GlcNAc...) asparagine glycan. Residues 634–654 (LLLHSFIFGIFTIYFLQAMFG) traverse the membrane as a helical segment. The interval 659–707 (PGVAKQRHSKPPNEKKKQKSNSGQGESAAAKSSGHGADTVRRNKKNEKS) is disordered. The segment covering 696–707 (DTVRRNKKNEKS) has biased composition (basic and acidic residues).

It belongs to the lipase maturation factor family.

The protein resides in the endoplasmic reticulum membrane. Involved in the maturation of specific proteins in the endoplasmic reticulum. In Xenopus tropicalis (Western clawed frog), this protein is Lipase maturation factor 2 (lmf2).